Reading from the N-terminus, the 347-residue chain is Quinolinate synthase (347 aa).

2 residues coordinate iminosuccinate: histidine 47 and serine 68. Cysteine 113 contacts [4Fe-4S] cluster. Residues 139-141 (YAN) and serine 156 each bind iminosuccinate. Residue cysteine 200 participates in [4Fe-4S] cluster binding. Residues 226–228 (HPE) and threonine 243 contribute to the iminosuccinate site. Cysteine 297 is a binding site for [4Fe-4S] cluster.

The protein belongs to the quinolinate synthase family. Type 1 subfamily. Requires [4Fe-4S] cluster as cofactor.

It is found in the cytoplasm. It catalyses the reaction iminosuccinate + dihydroxyacetone phosphate = quinolinate + phosphate + 2 H2O + H(+). It participates in cofactor biosynthesis; NAD(+) biosynthesis; quinolinate from iminoaspartate: step 1/1. Functionally, catalyzes the condensation of iminoaspartate with dihydroxyacetone phosphate to form quinolinate. The chain is Quinolinate synthase from Salmonella heidelberg (strain SL476).